Reading from the N-terminus, the 451-residue chain is tRNA-2-methylthio-N(6)-dimethylallyladenosine synthase (451 aa).

An MTTase N-terminal domain is found at 2–119; that stretch reads QNLYIKTYGC…LPDLLDACLA (118 aa). C11, C48, C82, C157, C161, and C164 together coordinate [4Fe-4S] cluster. The Radical SAM core domain occupies 143 to 377; sequence GRDGATAFVT…RINGLAQGYA (235 aa). The 64-residue stretch at 378–441 folds into the TRAM domain; that stretch reads QALVGTQQAV…PNSLRGRAAL (64 aa).

The protein belongs to the methylthiotransferase family. MiaB subfamily. Monomer. It depends on [4Fe-4S] cluster as a cofactor.

Its subcellular location is the cytoplasm. It carries out the reaction N(6)-dimethylallyladenosine(37) in tRNA + (sulfur carrier)-SH + AH2 + 2 S-adenosyl-L-methionine = 2-methylsulfanyl-N(6)-dimethylallyladenosine(37) in tRNA + (sulfur carrier)-H + 5'-deoxyadenosine + L-methionine + A + S-adenosyl-L-homocysteine + 2 H(+). In terms of biological role, catalyzes the methylthiolation of N6-(dimethylallyl)adenosine (i(6)A), leading to the formation of 2-methylthio-N6-(dimethylallyl)adenosine (ms(2)i(6)A) at position 37 in tRNAs that read codons beginning with uridine. This chain is tRNA-2-methylthio-N(6)-dimethylallyladenosine synthase, found in Acidithiobacillus ferrooxidans (strain ATCC 23270 / DSM 14882 / CIP 104768 / NCIMB 8455) (Ferrobacillus ferrooxidans (strain ATCC 23270)).